The sequence spans 123 residues: WAP four-disulfide core domain protein 5 (123 aa).

Positions 1-24 (MRIQSLLLLGALLAVGSQLPAVFG) are cleaved as a signal peptide. WAP domains lie at 27-73 (KGEK…CVPR) and 74-121 (VSVK…RDPA). 8 disulfides stabilise this stretch: Cys-34-Cys-62, Cys-41-Cys-66, Cys-49-Cys-61, Cys-55-Cys-70, Cys-81-Cys-109, Cys-88-Cys-113, Cys-96-Cys-108, and Cys-102-Cys-117.

It is found in the secreted. Its function is as follows. Putative acid-stable proteinase inhibitor. The protein is WAP four-disulfide core domain protein 5 (WFDC5) of Chlorocebus aethiops (Green monkey).